The following is a 611-amino-acid chain: DNA mismatch repair protein MutL (611 aa).

This sequence belongs to the DNA mismatch repair MutL/HexB family.

Functionally, this protein is involved in the repair of mismatches in DNA. It is required for dam-dependent methyl-directed DNA mismatch repair. May act as a 'molecular matchmaker', a protein that promotes the formation of a stable complex between two or more DNA-binding proteins in an ATP-dependent manner without itself being part of a final effector complex. The polypeptide is DNA mismatch repair protein MutL (Bartonella bacilliformis (strain ATCC 35685 / KC583 / Herrer 020/F12,63)).